Reading from the N-terminus, the 451-residue chain is Bifunctional protein GlmU (451 aa).

Positions 1–231 (MDSPLAIIVL…ADEVAGINSR (231 aa)) are pyrophosphorylase. UDP-N-acetyl-alpha-D-glucosamine contacts are provided by residues 10–13 (LAAG), Lys24, Gln74, 79–80 (GT), 102–104 (YGD), Gly142, Glu156, Asn171, and Asn229. Residue Asp104 coordinates Mg(2+). Asn229 is a binding site for Mg(2+). The segment at 232-252 (GELAEAEGRWQQRRRAAAMAD) is linker. The N-acetyltransferase stretch occupies residues 253 to 451 (GASLIAPETV…MKKKKAEKKS (199 aa)). Residues Arg318 and Lys336 each contribute to the UDP-N-acetyl-alpha-D-glucosamine site. His348 (proton acceptor) is an active-site residue. Positions 351 and 362 each coordinate UDP-N-acetyl-alpha-D-glucosamine. Acetyl-CoA is bound by residues Ala365, 371-372 (NY), Ser390, Ala408, and Arg425.

This sequence in the N-terminal section; belongs to the N-acetylglucosamine-1-phosphate uridyltransferase family. The protein in the C-terminal section; belongs to the transferase hexapeptide repeat family. Homotrimer. Requires Mg(2+) as cofactor.

It localises to the cytoplasm. The catalysed reaction is alpha-D-glucosamine 1-phosphate + acetyl-CoA = N-acetyl-alpha-D-glucosamine 1-phosphate + CoA + H(+). It catalyses the reaction N-acetyl-alpha-D-glucosamine 1-phosphate + UTP + H(+) = UDP-N-acetyl-alpha-D-glucosamine + diphosphate. Its pathway is nucleotide-sugar biosynthesis; UDP-N-acetyl-alpha-D-glucosamine biosynthesis; N-acetyl-alpha-D-glucosamine 1-phosphate from alpha-D-glucosamine 6-phosphate (route II): step 2/2. It participates in nucleotide-sugar biosynthesis; UDP-N-acetyl-alpha-D-glucosamine biosynthesis; UDP-N-acetyl-alpha-D-glucosamine from N-acetyl-alpha-D-glucosamine 1-phosphate: step 1/1. It functions in the pathway bacterial outer membrane biogenesis; LPS lipid A biosynthesis. In terms of biological role, catalyzes the last two sequential reactions in the de novo biosynthetic pathway for UDP-N-acetylglucosamine (UDP-GlcNAc). The C-terminal domain catalyzes the transfer of acetyl group from acetyl coenzyme A to glucosamine-1-phosphate (GlcN-1-P) to produce N-acetylglucosamine-1-phosphate (GlcNAc-1-P), which is converted into UDP-GlcNAc by the transfer of uridine 5-monophosphate (from uridine 5-triphosphate), a reaction catalyzed by the N-terminal domain. The polypeptide is Bifunctional protein GlmU (Novosphingobium aromaticivorans (strain ATCC 700278 / DSM 12444 / CCUG 56034 / CIP 105152 / NBRC 16084 / F199)).